Consider the following 396-residue polypeptide: Elongation factor Tu (396 aa).

Positions 10–206 (KPHVNVGTIG…ALDTFIPEPT (197 aa)) constitute a tr-type G domain. Residues 19 to 26 (GHVDHGKT) form a G1 region. 19 to 26 (GHVDHGKT) contributes to the GTP binding site. Thr-26 is a binding site for Mg(2+). The interval 60 to 64 (GITIS) is G2. The tract at residues 81–84 (DCPG) is G3. Residues 81 to 85 (DCPGH) and 136 to 139 (NKAD) contribute to the GTP site. A G4 region spans residues 136–139 (NKAD). The segment at 174-176 (SAR) is G5.

It belongs to the TRAFAC class translation factor GTPase superfamily. Classic translation factor GTPase family. EF-Tu/EF-1A subfamily. In terms of assembly, monomer.

It localises to the cytoplasm. It carries out the reaction GTP + H2O = GDP + phosphate + H(+). Functionally, GTP hydrolase that promotes the GTP-dependent binding of aminoacyl-tRNA to the A-site of ribosomes during protein biosynthesis. The protein is Elongation factor Tu of Xanthomonas oryzae pv. oryzae (strain MAFF 311018).